The primary structure comprises 190 residues: HTH-type transcriptional repressor CutR (190 aa).

The HTH deoR-type domain occupies 3-58 (PINRQQHILKWLKEEGSLRISDISARFGVSEMTVYRDVNQLVQSNQVIKTAGGITL). A DNA-binding region (H-T-H motif) is located at residues 20–39 (LRISDISARFGVSEMTVYRD).

The protein resides in the cytoplasm. Its function is as follows. May act as a negative transcriptional regulator of cutJ/ycnJ in the presence of copper. May use copper as a corepressor. The polypeptide is HTH-type transcriptional repressor CutR (Bacillus subtilis (strain 168)).